A 464-amino-acid polypeptide reads, in one-letter code: Elongation factor 1-alpha (464 aa).

A tr-type G domain is found at 5–242 (KTHINIVVIG…DSVVPPQRPT (238 aa)). Residues 14 to 21 (GHVDSGKS), 91 to 95 (DAPGH), and 153 to 156 (NKMD) each bind GTP. 5-glutamyl glycerylphosphorylethanolamine occurs at positions 301 and 374.

Belongs to the TRAFAC class translation factor GTPase superfamily. Classic translation factor GTPase family. EF-Tu/EF-1A subfamily.

The protein localises to the cytoplasm. This protein promotes the GTP-dependent binding of aminoacyl-tRNA to the A-site of ribosomes during protein biosynthesis. The protein is Elongation factor 1-alpha of Onchocerca volvulus.